A 240-amino-acid chain; its full sequence is MADS-box transcription factor 27 (240 aa).

The 61-residue stretch at 1 to 61 folds into the MADS-box domain; sequence MGRGKIVIRR…GRLYEYSSTS (61 aa). Positions 86–176 constitute a K-box domain; it reads LKFWQREAAS…YKKISLIRQE (91 aa). The segment covering 220 to 231 has biased composition (polar residues); sequence LPQHSDAEQSTA. Residues 220 to 240 are disordered; it reads LPQHSDAEQSTAPKLGLQLNP.

As to expression, ubiquitous.

It localises to the nucleus. Its function is as follows. Probable transcription factor. The chain is MADS-box transcription factor 27 (MADS27) from Oryza sativa subsp. japonica (Rice).